The following is a 508-amino-acid chain: p-aminobenzoyl-glutamate transport protein (508 aa).

13 helical membrane-spanning segments follow: residues 30 to 50, 85 to 105, 121 to 139, 140 to 159, 164 to 184, 211 to 231, 261 to 281, 303 to 323, 343 to 363, 382 to 402, 405 to 425, 439 to 459, and 479 to 499; these read FLLFIYLIIVLMVTTAILSAF, FSGFAPLGAILALVLGAGLAE, VNARYASYMVLFIAFFSHI, SSDAALVIMPPMGALIFLAV, VAGLLAAIAGVGCGFTANLLI, IDNWYFMASSVVVLTIVGGLI, GLRIAGVVSLLFIAAIALMVI, GIVPLIILFFFVVSLAYGIAT, MAGFIVMVFPLAQFVAMFNWS, LSGIPAFVGLALLSSFLCMFI, GSAIWSILAPIFVPMFMLLGF, SSVLPLAPVSPFVPLFLGFLQ, and LIFLVVWLLMLLAWYLVGLPI.

The protein resides in the cell inner membrane. It carries out the reaction N-(4-aminobenzoyl)-L-glutamate(in) + H(+)(in) = N-(4-aminobenzoyl)-L-glutamate(out) + H(+)(out). Completely inhibited by 100 nM sodium azide and by the proton ionophore carbonyl cyanide m-chlorophenylhydrazone (CCCP). Is also strongly inhibited by 100 mM potassium fluoride. Its function is as follows. Essential for aminobenzoyl-glutamate utilization. It catalyzes the concentration-dependent uptake of p-aminobenzoyl-glutamate (PABA-GLU) into the cell and allows accumulation of PABA-GLU to a concentration enabling AbgAB to catalyze cleavage into p-aminobenzoate and glutamate. It also seems to increase the sensitivity to low levels of aminobenzoyl-glutamate. May actually serve physiologically as a transporter for some other molecule, perhaps a dipeptide, and that it transports p-aminobenzoyl-glutamate as a secondary activity. The physiological role of abgABT should be clarified. The polypeptide is p-aminobenzoyl-glutamate transport protein (Escherichia coli (strain K12)).